A 113-amino-acid chain; its full sequence is uncharacterized protein (113 aa).

Disordered stretches follow at residues 1 to 22 (MGEH…PLAQ) and 90 to 113 (DGRH…SDDL). Residues 90–99 (DGRHTTESSF) are compositionally biased toward basic and acidic residues. Over residues 100–113 (EHSSPSRSPQSDDL) the composition is skewed to low complexity.

This is an uncharacterized protein from Mycobacterium tuberculosis (strain ATCC 25618 / H37Rv).